We begin with the raw amino-acid sequence, 175 residues long: Archaemetzincin (175 aa).

Zn(2+) is bound at residue His125. Residue Glu126 is the Proton acceptor of the active site. Zn(2+) contacts are provided by His129, His135, Cys136, Cys141, Cys160, and Cys163.

Belongs to the peptidase M54 family. In terms of assembly, monomer. Requires Zn(2+) as cofactor.

Probable zinc metalloprotease whose natural substrate is unknown. Does not show endo- or exopeptidase activity against resorufin labeled casein, p-nitroanilide (pNA), amidomethylcoumarin (AMC) (one to three amino acids in length), and hippuryl-aminoacid substrates. This is Archaemetzincin from Methanopyrus kandleri (strain AV19 / DSM 6324 / JCM 9639 / NBRC 100938).